Consider the following 184-residue polypeptide: ATP synthase subunit b, chloroplastic (184 aa).

The helical transmembrane segment at L27–L49 threads the bilayer.

Belongs to the ATPase B chain family. In terms of assembly, F-type ATPases have 2 components, F(1) - the catalytic core - and F(0) - the membrane proton channel. F(1) has five subunits: alpha(3), beta(3), gamma(1), delta(1), epsilon(1). F(0) has four main subunits: a(1), b(1), b'(1) and c(10-14). The alpha and beta chains form an alternating ring which encloses part of the gamma chain. F(1) is attached to F(0) by a central stalk formed by the gamma and epsilon chains, while a peripheral stalk is formed by the delta, b and b' chains.

Its subcellular location is the plastid. It localises to the chloroplast thylakoid membrane. Its function is as follows. F(1)F(0) ATP synthase produces ATP from ADP in the presence of a proton or sodium gradient. F-type ATPases consist of two structural domains, F(1) containing the extramembraneous catalytic core and F(0) containing the membrane proton channel, linked together by a central stalk and a peripheral stalk. During catalysis, ATP synthesis in the catalytic domain of F(1) is coupled via a rotary mechanism of the central stalk subunits to proton translocation. In terms of biological role, component of the F(0) channel, it forms part of the peripheral stalk, linking F(1) to F(0). The chain is ATP synthase subunit b, chloroplastic from Pelargonium hortorum (Common geranium).